A 184-amino-acid chain; its full sequence is Probable sensory rhodopsin transducer (184 aa).

Transmembrane regions (helical) follow at residues 14–34 (TLGVGAVLVLVLATLAVVNVY) and 52–72 (GLVSILLIVAVALLFVATIIG). An HAMP domain is found at 73 to 125 (RERTAAVETLAAQARQIEQGELDVDLATNRTDDVGDIYRALAVLRDSEQLDRQ).

It belongs to the methyl-accepting chemotaxis (MCP) protein family. In terms of assembly, interacts with Xop2/SRM.

The protein resides in the membrane. Its function is as follows. The HtrM-Xop2/SRM complex may interact with CheB or CheR and modulate their availability to Sop1 or Sop2. This Haloarcula marismortui (strain ATCC 43049 / DSM 3752 / JCM 8966 / VKM B-1809) (Halobacterium marismortui) protein is Probable sensory rhodopsin transducer (htrM).